A 779-amino-acid chain; its full sequence is Potassium/sodium hyperpolarization-activated cyclic nucleotide-gated channel 3 (779 aa).

The tract at residues Met1–Gln47 is disordered. At Met1 to Asp96 the chain is on the cytoplasmic side. Residues Pro7 to Ala32 show a composition bias toward low complexity. Residues Arg45–Asp90 form an involved in subunit assembly region. A helical transmembrane segment spans residues Leu97–Phe117. Topologically, residues Lys118–Pro123 are extracellular. A helical transmembrane segment spans residues Pro124 to Phe144. The Cytoplasmic segment spans residues Arg145–Thr170. The chain crosses the membrane as a helical span at residues Trp171–Leu191. Over Glu192–Tyr200 the chain is Extracellular. A helical; Voltage-sensor transmembrane segment spans residues Lys201–Leu221. Topologically, residues Arg222–Asn252 are cytoplasmic. Residues Leu253 to Met273 form a helical membrane-spanning segment. Over Leu274–Gln296 the chain is Extracellular. Asn290 carries N-linked (GlcNAc...) asparagine glycosylation. An intramembrane region (pore-forming) is located at residues Tyr297 to Pro318. At Val319 to Met328 the chain is on the extracellular side. A helical transmembrane segment spans residues Leu329–Ile349. Topologically, residues Gln350 to Met779 are cytoplasmic. Positions Asp353–Met779 are interaction with KCTD3. The 3',5'-cyclic AMP site is built by Gly491, Glu492, Cys494, Arg501, Thr502, Arg542, and Arg545. Residues Lys549 to Met569 form a disordered region. Phosphoserine is present on Ser633. Over residues Ser687–Ser697 the composition is skewed to polar residues. Positions Ser687–Met779 are disordered.

The protein belongs to the potassium channel HCN family. In terms of assembly, homotetramer. The potassium channel is composed of a homo- or heterotetrameric complex of pore-forming subunits. Interacts with HCN1. Interacts with KCTD3; this interaction increases cell surface expression and current density of this channel. Interacts with PEX5L. As to expression, detected in hypothalamus, amygdala, olfactory bulb, hippocampus and retina (at protein level). Highly expressed in brain and heart, in particular in ventricle, atrium and in sinoatrial node (SAN). Detected at low levels in skeletal muscle and lung. Expressed in DRG neurons.

It localises to the cell membrane. The enzyme catalyses K(+)(in) = K(+)(out). The catalysed reaction is Na(+)(in) = Na(+)(out). Unlike HCN2 and HCN4, HCN3 is insensitive to cyclic nucleotides, such as cAMP or cGMP. This lack of sensitivity of HCN3, despite harboring a functional cyclic nucleotide-binding domain (CNBD), may be explained by its shorter C-terminal sequence, which may alter the normal autoinhibition of the channel. Inhibited by Cs(1+) and ivabradine. Phosphatidylinositol-4,5-bisphosphate (PIP(2)) shifts HCN3 activation to more depolarized potentials and accelerated activation kinetics. Hyperpolarization-activated ion channel that are permeable to sodium and potassium ions, with an about 3:1 preference for potassium ions. Contributes to the native pacemaker currents in heart (If) and in neurons (Ih). In particular, plays a pivotal role in maintaining excitability and promoting rhythmic burst firing within hypothalamic nuclei. Exerts a significant influence on the configuration of the cardiac action potential waveform. Does not appear to play a prominent role in the processing of acute, neuropathic, or inflammatory pain. In Mus musculus (Mouse), this protein is Potassium/sodium hyperpolarization-activated cyclic nucleotide-gated channel 3 (Hcn3).